A 2273-amino-acid chain; its full sequence is Retinal-specific phospholipid-transporting ATPase ABCA4 (2273 aa).

Residues methionine 1–glutamine 21 are Cytoplasmic-facing. A helical membrane pass occupies residues lysine 22–leucine 42. At arginine 43–serine 646 the chain is on the extracellular side. 2 disulfide bridges follow: cysteine 54/cysteine 81 and cysteine 75/cysteine 324. Asparagine 98 is a glycosylation site (N-linked (GlcNAc...) asparagine). Mg(2+)-binding residues include serine 336 and asparagine 338. A disulfide bridge connects residues cysteine 370 and cysteine 519. 3 N-linked (GlcNAc...) asparagine glycosylation sites follow: asparagine 415, asparagine 444, and asparagine 504. Arginine 587 and arginine 653 together coordinate an N-all-trans-retinylidenephosphatidylethanolamine. Cystine bridges form between cysteine 641–cysteine 1490, cysteine 1444–cysteine 1455, and cysteine 1488–cysteine 1502. Residues phenylalanine 647 to valine 667 form a helical membrane-spanning segment. Topologically, residues serine 668 to threonine 699 are cytoplasmic. A helical membrane pass occupies residues tryptophan 700 to methionine 720. The Extracellular segment spans residues histidine 721 to proline 730. A helical transmembrane segment spans residues phenylalanine 731–leucine 751. Over serine 752 to serine 759 the chain is Cytoplasmic. Residues leucine 760–phenylalanine 780 form a helical membrane-spanning segment. Residues alanine 781 to serine 835 lie on the Extracellular side of the membrane. A helical transmembrane segment spans residues phenylalanine 836–tyrosine 856. Residues leucine 857–glutamine 1376 are Cytoplasmic-facing. Positions glutamate 891 to glutamate 911 are disordered. Threonine 901 bears the Phosphothreonine mark. Residues valine 929–valine 1160 enclose the ABC transporter 1 domain. 3 residues coordinate ATP: phenylalanine 938, glycine 966, and lysine 969. Threonine 970 is a binding site for Mg(2+). The ATP site is built by threonine 971, glutamine 1010, lysine 1054, glycine 1064, glycine 1065, and histidine 1118. The residue at position 1185 (serine 1185) is a Phosphoserine. The disordered stretch occupies residues proline 1284 to asparagine 1345. Position 1313 is a phosphothreonine (threonine 1313). Serine 1317 is modified (phosphoserine). The span at glycine 1331 to proline 1340 shows a compositional bias: pro residues. The helical transmembrane segment at isoleucine 1377 to phenylalanine 1397 threads the bilayer. Topologically, residues glycine 1398 to asparagine 1727 are extracellular. N-linked (GlcNAc...) asparagine glycosylation is present at asparagine 1469. N-linked (GlcNAc...) asparagine glycans are attached at residues asparagine 1529, asparagine 1588, and asparagine 1662. The helical transmembrane segment at phenylalanine 1728–glycine 1748 threads the bilayer. The Cytoplasmic portion of the chain corresponds to phenylalanine 1749–asparagine 1759. Residues leucine 1760–proline 1780 form a helical membrane-spanning segment. At alanine 1781–tyrosine 1792 the chain is on the extracellular side. A helical transmembrane segment spans residues valine 1793–leucine 1813. The Cytoplasmic portion of the chain corresponds to glutamate 1814 to lysine 1831. The helical transmembrane segment at leucine 1832–glutamine 1852 threads the bilayer. Over alanine 1853 to aspartate 1873 the chain is Extracellular. A helical transmembrane segment spans residues leucine 1874–leucine 1894. Topologically, residues leucine 1895–aspartate 2273 are cytoplasmic. The region spanning leucine 1938 to lysine 2170 is the ABC transporter 2 domain. ATP-binding residues include asparagine 1974, glycine 1975, lysine 1978, threonine 1979, threonine 1980, and glycine 2073. Residue threonine 1979 participates in Mg(2+) binding. The essential for ATP binding and ATPase activity stretch occupies residues valine 2244–alanine 2249.

The protein belongs to the ABC transporter superfamily. ABCA family. Proteolytic cleavage by trypsin leads to a 120-kDa N-terminal fragment and a 115-kDa C-terminal fragment that are linked through disulfide bonds. Post-translationally, N-glycosylated. In terms of processing, phosphorylation is independent of light exposure and modulates ATPase activity. In terms of tissue distribution, retinal-specific. Seems to be exclusively found in the rims of rod photoreceptor cells.

The protein localises to the membrane. Its subcellular location is the endoplasmic reticulum. It is found in the cytoplasmic vesicle. The protein resides in the cell projection. It localises to the cilium. The protein localises to the photoreceptor outer segment. The catalysed reaction is an N-all-trans-retinylidenephosphatidylethanolamine(out) + ATP + H2O = an N-all-trans-retinylidenephosphatidylethanolamine(in) + ADP + phosphate + H(+). It catalyses the reaction ATP + H2O + phospholipidSide 1 = ADP + phosphate + phospholipidSide 2.. The enzyme catalyses a 1,2-diacyl-sn-glycero-3-phosphoethanolamine(out) + ATP + H2O = a 1,2-diacyl-sn-glycero-3-phosphoethanolamine(in) + ADP + phosphate + H(+). It carries out the reaction N-11-cis-retinylidenephosphatidylethanolamine(out) + ATP + H2O = N-11-cis-retinylidenephosphatidylethanolamine(in) + ADP + phosphate + H(+). The catalysed reaction is ATP + H2O = ADP + phosphate + H(+). ATPase activity is decreased by cholesterol and ceramide. Phospholipids translocase activity is highly reduced by berylium fluoride and aluminum floride. N-ethylmaleimide inhibits phospholipid translocase activity. Functionally, flippase that catalyzes in an ATP-dependent manner the transport of retinal-phosphatidylethanolamine conjugates like 11-cis and all-trans isomers of N-retinylidene-phosphatidylethanolamine (N-Ret-PE) from the lumen to the cytoplasmic leaflet of photoreceptor outer segment disk membranes, where 11-cis-retinylidene-phosphatidylethanolamine is then isomerized to its all-trans isomer and reduced by RDH8 to produce all-trans-retinol. This transport activity ensures that all-trans-retinal generated from photoexcitation and 11-cis-retinal not needed for the regeneration of rhodopsin and cone opsins are effectively cleared from the photoreceptors, therefore preventing their accumulation and the formation of toxic bisretinoid. Displays ATPase activity in vitro in absence of retinal substrate. May display GTPase activity that is strongly influenced by the lipid environment and the presence of retinoid compounds. Binds the unprotonated form of N-retinylidene-phosphatidylethanolamine with high affinity in the absence of ATP, and ATP binding and hydrolysis induce a protein conformational change that causes N-retinylidene-phosphatidylethanolamine release. This is Retinal-specific phospholipid-transporting ATPase ABCA4 from Homo sapiens (Human).